A 143-amino-acid polypeptide reads, in one-letter code: Large ribosomal subunit protein uL15 (143 aa).

Residues 1 to 48 form a disordered region; the sequence is MRLNTISPSKGAKHSSKRLGRGIGSGLGKTSGRGHKGQKARSGCSIHR. Positions 11-20 are enriched in basic residues; the sequence is GAKHSSKRLG. Positions 21-31 are enriched in gly residues; it reads RGIGSGLGKTS.

Belongs to the universal ribosomal protein uL15 family. Part of the 50S ribosomal subunit.

Its function is as follows. Binds to the 23S rRNA. The sequence is that of Large ribosomal subunit protein uL15 from Baumannia cicadellinicola subsp. Homalodisca coagulata.